Here is a 360-residue protein sequence, read N- to C-terminus: uncharacterized protein (360 aa).

In terms of domain architecture, ABC transporter spans 4–235; that stretch reads LSLQHIQKIY…PANMFVAGFI (232 aa). 37–44 is a binding site for ATP; it reads GPSGCGKS.

It belongs to the ABC transporter superfamily.

This is an uncharacterized protein from Escherichia coli O157:H7.